The sequence spans 77 residues: NADH-ubiquinone oxidoreductase chain 4L (77 aa).

2 helical membrane-spanning segments follow: residues 18-38 (LMFI…LFSG) and 44-64 (MFFY…VVMV).

Belongs to the complex I subunit 4L family.

It localises to the mitochondrion membrane. The catalysed reaction is a ubiquinone + NADH + 5 H(+)(in) = a ubiquinol + NAD(+) + 4 H(+)(out). In terms of biological role, core subunit of the mitochondrial membrane respiratory chain NADH dehydrogenase (Complex I) that is believed to belong to the minimal assembly required for catalysis. Complex I functions in the transfer of electrons from NADH to the respiratory chain. The immediate electron acceptor for the enzyme is believed to be ubiquinone. The polypeptide is NADH-ubiquinone oxidoreductase chain 4L (ND4L) (Ascaris suum (Pig roundworm)).